A 645-amino-acid polypeptide reads, in one-letter code: Cell pattern formation-associated protein stuA (645 aa).

A disordered region spans residues 1 to 52 (MNQMQPYADVHQPHMSTAAHAPASGPPAGLSHYSYPHQPSMMQPQQQQHQYG). A compositionally biased stretch (low complexity) spans 18-52 (AAHAPASGPPAGLSHYSYPHQPSMMQPQQQQHQYG). The HTH APSES-type domain maps to 124–230 (RVTATLWEDE…HDIGALLYHP (107 aa)). A DNA-binding region (H-T-H motif) is located at residues 158 to 179 (GTKLLNVAGMTRGRRDGILKSE). The segment at 246-645 (VDRNRRPDSM…HTLAAQRARR (400 aa)) is disordered. Composition is skewed to polar residues over residues 254-271 (SMQTQQRYMAGPTTSQAP) and 279-288 (MTNSVGSAMS). A compositionally biased stretch (low complexity) spans 317 to 330 (SASSMMGMGNQGSS). A compositionally biased stretch (polar residues) spans 336-365 (ANVQQHPQGNQPLSIDTGLSNARSVPTTPA). The span at 469 to 481 (PYNGNRGPYGYNP) shows a compositional bias: low complexity. 2 stretches are compositionally biased toward polar residues: residues 502–542 (SPHQ…NLYN) and 569–584 (YASQGYAPTNGVNSSG). The nuclear localization domain stretch occupies residues 585–613 (KRGRDEEDAETYRPDSVQGDDMGGLKRRK). A compositionally biased stretch (basic and acidic residues) spans 586 to 597 (RGRDEEDAETYR).

The protein belongs to the EFG1/PHD1/stuA family.

Its subcellular location is the nucleus. In terms of biological role, transcription factor that regulates asexual reproduction. Binds the StuA-response elements (StRE) with the consensus sequence 5'-(A/T)CGCG(T/A)N(A/C)-3' at the promoters of target genes. Regulates the expression of several effector genes (AvrLm1, AvrLm6 and AvrLm4-7) during infection stage. This Leptosphaeria maculans (strain JN3 / isolate v23.1.3 / race Av1-4-5-6-7-8) (Blackleg fungus) protein is Cell pattern formation-associated protein stuA.